Consider the following 234-residue polypeptide: Orotate phosphoribosyltransferase (234 aa).

Lys37 provides a ligand contact to 5-phospho-alpha-D-ribose 1-diphosphate. Residue 45 to 46 (FF) coordinates orotate. 5-phospho-alpha-D-ribose 1-diphosphate is bound by residues 83 to 84 (YK), Arg109, Lys110, Lys113, His115, and 134 to 142 (DDVISAGTS). The orotate site is built by Ser138 and Arg166.

The protein belongs to the purine/pyrimidine phosphoribosyltransferase family. PyrE subfamily. As to quaternary structure, homodimer. Mg(2+) is required as a cofactor.

The catalysed reaction is orotidine 5'-phosphate + diphosphate = orotate + 5-phospho-alpha-D-ribose 1-diphosphate. It participates in pyrimidine metabolism; UMP biosynthesis via de novo pathway; UMP from orotate: step 1/2. In terms of biological role, catalyzes the transfer of a ribosyl phosphate group from 5-phosphoribose 1-diphosphate to orotate, leading to the formation of orotidine monophosphate (OMP). The chain is Orotate phosphoribosyltransferase from Methylibium petroleiphilum (strain ATCC BAA-1232 / LMG 22953 / PM1).